Reading from the N-terminus, the 141-residue chain is Nucleoside diphosphate kinase (141 aa).

Residues K11, F59, R87, T93, R104, and N114 each coordinate ATP. The active-site Pros-phosphohistidine intermediate is the H117.

This sequence belongs to the NDK family. As to quaternary structure, homotetramer. Requires Mg(2+) as cofactor.

The protein localises to the cytoplasm. The enzyme catalyses a 2'-deoxyribonucleoside 5'-diphosphate + ATP = a 2'-deoxyribonucleoside 5'-triphosphate + ADP. It carries out the reaction a ribonucleoside 5'-diphosphate + ATP = a ribonucleoside 5'-triphosphate + ADP. Major role in the synthesis of nucleoside triphosphates other than ATP. The ATP gamma phosphate is transferred to the NDP beta phosphate via a ping-pong mechanism, using a phosphorylated active-site intermediate. The protein is Nucleoside diphosphate kinase of Ralstonia nicotianae (strain ATCC BAA-1114 / GMI1000) (Ralstonia solanacearum).